Consider the following 458-residue polypeptide: Bifunctional protein GlmU (458 aa).

A pyrophosphorylase region spans residues 1 to 230 (MLQIDVVILA…DWEVVGVNDK (230 aa)). UDP-N-acetyl-alpha-D-glucosamine contacts are provided by residues 9-12 (LAAG), lysine 23, glutamine 75, and 80-81 (GT). Residue aspartate 104 participates in Mg(2+) binding. Positions 139, 155, 170, and 228 each coordinate UDP-N-acetyl-alpha-D-glucosamine. Asparagine 228 contacts Mg(2+). The tract at residues 231-251 (IQLSTLERAHQQDVAKGLMEQ) is linker. An N-acetyltransferase region spans residues 252-458 (GVMFADPARF…NWKRPKKNKD (207 aa)). The UDP-N-acetyl-alpha-D-glucosamine site is built by arginine 334 and lysine 352. The Proton acceptor role is filled by histidine 364. The UDP-N-acetyl-alpha-D-glucosamine site is built by tyrosine 367 and asparagine 378. Acetyl-CoA-binding positions include alanine 381, 387-388 (NY), serine 406, alanine 424, and arginine 441.

It in the N-terminal section; belongs to the N-acetylglucosamine-1-phosphate uridyltransferase family. In the C-terminal section; belongs to the transferase hexapeptide repeat family. As to quaternary structure, homotrimer. Mg(2+) serves as cofactor.

It is found in the cytoplasm. The enzyme catalyses alpha-D-glucosamine 1-phosphate + acetyl-CoA = N-acetyl-alpha-D-glucosamine 1-phosphate + CoA + H(+). It carries out the reaction N-acetyl-alpha-D-glucosamine 1-phosphate + UTP + H(+) = UDP-N-acetyl-alpha-D-glucosamine + diphosphate. It functions in the pathway nucleotide-sugar biosynthesis; UDP-N-acetyl-alpha-D-glucosamine biosynthesis; N-acetyl-alpha-D-glucosamine 1-phosphate from alpha-D-glucosamine 6-phosphate (route II): step 2/2. The protein operates within nucleotide-sugar biosynthesis; UDP-N-acetyl-alpha-D-glucosamine biosynthesis; UDP-N-acetyl-alpha-D-glucosamine from N-acetyl-alpha-D-glucosamine 1-phosphate: step 1/1. It participates in bacterial outer membrane biogenesis; LPS lipid A biosynthesis. Functionally, catalyzes the last two sequential reactions in the de novo biosynthetic pathway for UDP-N-acetylglucosamine (UDP-GlcNAc). The C-terminal domain catalyzes the transfer of acetyl group from acetyl coenzyme A to glucosamine-1-phosphate (GlcN-1-P) to produce N-acetylglucosamine-1-phosphate (GlcNAc-1-P), which is converted into UDP-GlcNAc by the transfer of uridine 5-monophosphate (from uridine 5-triphosphate), a reaction catalyzed by the N-terminal domain. This is Bifunctional protein GlmU from Nitrosomonas eutropha (strain DSM 101675 / C91 / Nm57).